Reading from the N-terminus, the 568-residue chain is Dihydroxy-acid dehydratase (568 aa).

C59 lines the [2Fe-2S] cluster pocket. D91 contributes to the Mg(2+) binding site. Residue C132 coordinates [2Fe-2S] cluster. D133 and K134 together coordinate Mg(2+). The residue at position 134 (K134) is an N6-carboxylysine. C204 contacts [2Fe-2S] cluster. Residue E456 coordinates Mg(2+). The active-site Proton acceptor is the S482.

The protein belongs to the IlvD/Edd family. As to quaternary structure, homodimer. Requires [2Fe-2S] cluster as cofactor. Mg(2+) serves as cofactor.

The catalysed reaction is (2R)-2,3-dihydroxy-3-methylbutanoate = 3-methyl-2-oxobutanoate + H2O. The enzyme catalyses (2R,3R)-2,3-dihydroxy-3-methylpentanoate = (S)-3-methyl-2-oxopentanoate + H2O. It participates in amino-acid biosynthesis; L-isoleucine biosynthesis; L-isoleucine from 2-oxobutanoate: step 3/4. It functions in the pathway amino-acid biosynthesis; L-valine biosynthesis; L-valine from pyruvate: step 3/4. Its function is as follows. Functions in the biosynthesis of branched-chain amino acids. Catalyzes the dehydration of (2R,3R)-2,3-dihydroxy-3-methylpentanoate (2,3-dihydroxy-3-methylvalerate) into 2-oxo-3-methylpentanoate (2-oxo-3-methylvalerate) and of (2R)-2,3-dihydroxy-3-methylbutanoate (2,3-dihydroxyisovalerate) into 2-oxo-3-methylbutanoate (2-oxoisovalerate), the penultimate precursor to L-isoleucine and L-valine, respectively. This is Dihydroxy-acid dehydratase from Verminephrobacter eiseniae (strain EF01-2).